Here is a 109-residue protein sequence, read N- to C-terminus: Nucleoid-associated protein VV2410 (109 aa).

Residues 1–22 (MFGKGGMGNLMKQAQQMQERMQ) form a disordered region.

Belongs to the YbaB/EbfC family. As to quaternary structure, homodimer.

The protein localises to the cytoplasm. It localises to the nucleoid. In terms of biological role, binds to DNA and alters its conformation. May be involved in regulation of gene expression, nucleoid organization and DNA protection. In Vibrio vulnificus (strain YJ016), this protein is Nucleoid-associated protein VV2410.